A 1193-amino-acid polypeptide reads, in one-letter code: Protogenin (1193 aa).

The N-terminal stretch at 1 to 23 (MAPPVRPGMLPLLLLLLLPPLGS) is a signal peptide. Ig-like domains follow at residues 24–124 (VPGV…AHLT), 126–217 (STIS…ASLT), 230–317 (PTII…ATLT), and 322–406 (PSFV…ARLT). At 24-944 (VPGVWSFSEL…YYHLDQKSMT (921 aa)) the chain is on the extracellular side. 2 disulfides stabilise this stretch: Cys54/Cys107 and Cys150/Cys200. Residue Asn84 is glycosylated (N-linked (GlcNAc...) asparagine). Residue Asn238 is glycosylated (N-linked (GlcNAc...) asparagine). Disulfide bonds link Cys251–Cys299 and Cys343–Cys390. 5 Fibronectin type-III domains span residues 416 to 510 (APYN…TLED), 512 to 608 (PLRP…TPKA), 613 to 712 (APKS…VRDR), 719 to 812 (PPHH…TLPE), and 817 to 912 (PPVG…VLPK). N-linked (GlcNAc...) asparagine glycosylation occurs at Asn625. Residues 945-965 (GIAVGVGIALTCILICVLILI) form a helical membrane-spanning segment. Over 966 to 1193 (YRSKARKSSA…LRHAAESVPV (228 aa)) the chain is Cytoplasmic. Disordered regions lie at residues 974 to 1018 (SASK…PMMP) and 1078 to 1193 (VLIS…SVPV). 2 stretches are compositionally biased toward polar residues: residues 978-990 (TTQSGTQPLSRAS) and 1086-1095 (PSSPGQTTSF). Positions 1105–1133 (DTEHSANSEGSHETGDSGRFSHESNDEIH) are enriched in basic and acidic residues. Positions 1136–1150 (SVISSTPPTSNSLTC) are enriched in polar residues.

The protein belongs to the immunoglobulin superfamily. DCC family.

It is found in the membrane. Its function is as follows. May play a role in anteroposterior axis elongation. This is Protogenin from Rattus norvegicus (Rat).